The following is a 207-amino-acid chain: dITP/XTP pyrophosphatase (207 aa).

Substrate is bound at residue 10-15 (TRNAGK). The Mg(2+) site is built by E43 and D72. The active-site Proton acceptor is the D72. Residues S73, 161 to 164 (FGYD), K184, and 189 to 190 (HR) each bind substrate.

This sequence belongs to the HAM1 NTPase family. As to quaternary structure, homodimer. The cofactor is Mg(2+).

The catalysed reaction is XTP + H2O = XMP + diphosphate + H(+). It carries out the reaction dITP + H2O = dIMP + diphosphate + H(+). The enzyme catalyses ITP + H2O = IMP + diphosphate + H(+). In terms of biological role, pyrophosphatase that catalyzes the hydrolysis of nucleoside triphosphates to their monophosphate derivatives, with a high preference for the non-canonical purine nucleotides XTP (xanthosine triphosphate), dITP (deoxyinosine triphosphate) and ITP. Seems to function as a house-cleaning enzyme that removes non-canonical purine nucleotides from the nucleotide pool, thus preventing their incorporation into DNA/RNA and avoiding chromosomal lesions. This chain is dITP/XTP pyrophosphatase, found in Nitratidesulfovibrio vulgaris (strain ATCC 29579 / DSM 644 / CCUG 34227 / NCIMB 8303 / VKM B-1760 / Hildenborough) (Desulfovibrio vulgaris).